The primary structure comprises 380 residues: S-phase entry cyclin-6 (380 aa).

Residues 63-91 (PRGKLQRDSTHLEKTRKRQLSNDSTDPIE) are disordered.

The protein belongs to the cyclin family. Cyclin AB subfamily.

Functionally, involved in G1/S and or S phase progression. Interacts with CDC28. The polypeptide is S-phase entry cyclin-6 (CLB6) (Saccharomyces cerevisiae (strain ATCC 204508 / S288c) (Baker's yeast)).